We begin with the raw amino-acid sequence, 37 residues long: Large ribosomal subunit protein bL36 (37 aa).

It belongs to the bacterial ribosomal protein bL36 family.

In Deinococcus deserti (strain DSM 17065 / CIP 109153 / LMG 22923 / VCD115), this protein is Large ribosomal subunit protein bL36.